Reading from the N-terminus, the 354-residue chain is Guanine nucleotide-binding protein G(i) subunit alpha-3 (354 aa).

Glycine 2 carries N-myristoyl glycine lipidation. Cysteine 3 carries the S-palmitoyl cysteine lipid modification. The 323-residue stretch at 32-354 folds into the G-alpha domain; sequence KEVKLLLLGA…KNNLKECGLY (323 aa). Positions 35-48 are G1 motif; the sequence is KLLLLGAGESGKST. Glycine 42, glutamate 43, serine 44, glycine 45, lysine 46, serine 47, threonine 48, aspartate 150, serine 151, leucine 175, arginine 176, threonine 177, arginine 178, valine 179, lysine 180, threonine 181, valine 201, and glycine 203 together coordinate GTP. Glutamate 43, serine 44, glycine 45, lysine 46, serine 47, and threonine 48 together coordinate GDP. Serine 47 is a binding site for Mg(2+). GDP contacts are provided by serine 151, leucine 175, arginine 176, threonine 177, and arginine 178. A G2 motif region spans residues 173-181; the sequence is DVLRTRVKT. Arginine 178 carries the ADP-ribosylarginine; by cholera toxin modification. Threonine 181 lines the Mg(2+) pocket. A G3 motif region spans residues 196-205; it reads FKMFDVGGQR. Position 204 is a deamidated glutamine; by Photorhabdus PAU_02230 (glutamine 204). Positions 265 to 272 are G4 motif; it reads ILFLNKKD. GTP-binding residues include asparagine 269, lysine 270, aspartate 272, leucine 273, cysteine 325, alanine 326, and threonine 327. The GDP site is built by asparagine 269, lysine 270, and aspartate 272. The segment at 324–329 is G5 motif; the sequence is TCATDT. Positions 325 and 326 each coordinate GDP. An ADP-ribosylcysteine; by pertussis toxin modification is found at cysteine 351.

Belongs to the G-alpha family. G(i/o/t/z) subfamily. In terms of assembly, heterotrimeric G proteins are composed of 3 units; alpha, beta and gamma. The alpha subunit contains the guanine nucleotide binding site. GTP binding causes dissociation of the heterotrimer, liberating the individual subunits so that they can interact with downstream effector proteins. Forms a complex with CCDC88A/GIV and EGFR which leads to enhanced EGFR signaling and triggering of cell migration; ligand stimulation is required for recruitment of GNAI3 to the complex. Interacts (inactive GDP-bound form) with CCDC88A/GIV (via GBA motif); the interaction leads to activation of GNAI3. Interacts (inactive GDP-bound form) with CCDC88C/DAPLE (via GBA motif); the interaction leads to activation of GNAI3. Interacts (inactive GDP-bound form) with NUCB1 (via GBA motif) and NUCB2 (via GBA motif); the interaction leads to activation of GNAI3. Interacts (inactive GDP-bound form) with PLCD4 (via GBA motif); the interaction leads to activation of GNAI3. Interacts with INSR; the interaction is probably mediated by CCDC88A/GIV. Interacts with GPSM1. Interacts (GDP-bound form) with GPSM2 (via GoLoco domains). Does not interact with RGS2. Interacts with RGS8 and RGS10; this strongly enhances the intrinsic GTPase activity. Interacts with RGS16; this strongly enhances the intrinsic GTPase activity. Interacts with RGS12. Interacts (via active GTP- or inactive GDP-bound form) with RGS14. Interacts (via active GTP-bound form) with TRPC5 (via ANK repeats) in a homotetrameric ion channel; the interaction is direct and activates the channel activity. (Microbial infection) Deamidated at Gln-204 by Photorhabdus asymbiotica toxin PAU_02230, blocking GTP hydrolysis of heterotrimeric GNAQ or GNA11 and G-alphai (GNAI1, GNAI2 or GNAI3) proteins, thereby activating RhoA.

The protein resides in the cytoplasm. Its subcellular location is the cell membrane. It is found in the cytoskeleton. It localises to the microtubule organizing center. The protein localises to the centrosome. Heterotrimeric guanine nucleotide-binding proteins (G proteins) function as transducers downstream of G protein-coupled receptors (GPCRs) in numerous signaling cascades. The alpha chain contains the guanine nucleotide binding site and alternates between an active, GTP-bound state and an inactive, GDP-bound state. Signaling by an activated GPCR promotes GDP release and GTP binding. The alpha subunit has a low GTPase activity that converts bound GTP to GDP, thereby terminating the signal. Both GDP release and GTP hydrolysis are modulated by numerous regulatory proteins. Signaling is mediated via effector proteins, such as adenylate cyclase. Inhibits adenylate cyclase activity, leading to decreased intracellular cAMP levels. Stimulates the activity of receptor-regulated K(+) channels. The active GTP-bound form prevents the association of RGS14 with centrosomes and is required for the translocation of RGS14 from the cytoplasm to the plasma membrane. May play a role in cell division. The active GTP-bound form activates the calcium permeant TRPC5 ion channels. The protein is Guanine nucleotide-binding protein G(i) subunit alpha-3 (GNAI3) of Homo sapiens (Human).